Here is a 329-residue protein sequence, read N- to C-terminus: DNA polymerase III subunit delta' (329 aa).

As to quaternary structure, component of the DNA clamp loading complex consisting of tau(3):delta(1):delta'(1). The DNA polymerase III holoenzyme complex contains at least 10 different subunits organized into 3 functionally essential subassemblies: the Pol III core, the beta sliding clamp processivity factor and the clamp-loading complex. The Pol III core (subunits alpha, epsilon and theta) contains the polymerase and the 3'-5' exonuclease proofreading activities. The polymerase is tethered to the template via the dimeric beta sliding clamp processivity factor. The DNA clamp-loading complex assembles the beta sliding clamp onto the primed template and plays a central role in the organization and communication at the replication fork.

The protein resides in the cytoplasm. It localises to the nucleoid. It carries out the reaction DNA(n) + a 2'-deoxyribonucleoside 5'-triphosphate = DNA(n+1) + diphosphate. In terms of biological role, DNA polymerase III is a complex, multichain enzyme responsible for most of the replicative synthesis in bacteria. This is DNA polymerase III subunit delta' (holB) from Bacillus subtilis (strain 168).